A 511-amino-acid chain; its full sequence is MRSFWLFLLLLLFCISFIKLTEGNEDAKRLYDDLMVNYNRHRRPSTSPNKPLTIKLKLRLSQIIDVHEIDQIMTCSVWLKQTWIDRKLSWDPVNYGGVNVLYVPYEMIWVPDIVLYNNADSNYNITISTKATLHYTGEVTWEPPAIFKSMCQIDVRWFPFDEQQCHLKFGSWTFSENLLSVELNEPSLRYEEEIDEKGIIDNVTVAEDGIDLSDYYPSVEWDIMSRVAKRRAKNYPSCCPQSAYIDVTYYLQLRRKPLFYTVNLVFPCVGISFLTILVFYLPSDSGEKVTLCISILVALTIFFLLLTEIIPATSITLPLIGKYLLFTMVMVTLSVVVTVISLNLHFRTPTTHLMPNWVKKVFLKWLPKLLFMRRPIDDYEEKFDDKKKPKDGKIALSVHAHRVSNVGNNIRNATIDDTIQKMYYSPPVVKAFENICFIAELLKKKDRDDKIDEDWKYVAMVLDRLFLLIFSIACFVGTVIILLRAPTLYDTRQPIDLQYRPANLSANPISF.

A signal peptide spans 1–16 (MRSFWLFLLLLLFCIS). The Extracellular segment spans residues 17–261 (FIKLTEGNED…QLRRKPLFYT (245 aa)). Asn-124 carries an N-linked (GlcNAc...) asparagine glycan. A disulfide bridge connects residues Cys-151 and Cys-165. Asn-202 is a glycosylation site (N-linked (GlcNAc...) asparagine). The cysteines at positions 238 and 239 are disulfide-linked. 3 helical membrane passes run 262–282 (VNLV…FYLP), 291–311 (LCIS…EIIP), and 324–344 (LLFT…SLNL). The Cytoplasmic segment spans residues 345-464 (HFRTPTTHLM…WKYVAMVLDR (120 aa)). Residues 465 to 485 (LFLLIFSIACFVGTVIILLRA) form a helical membrane-spanning segment.

The protein belongs to the ligand-gated ion channel (TC 1.A.9) family. Acetylcholine receptor (TC 1.A.9.1) subfamily. In terms of assembly, component of nicotinic acetylcholine receptor. In muscles, composed of 2 non-alpha subunits lev-1 and unc-29, and 3 alpha subunits unc-38, unc-63 and lev-8. In cholinergic motoneurons, composed of 2 non-alpha subunits acr-2 and acr-3, and 3 alpha subunits unc-38, unc-63 and acr-12.

The protein localises to the postsynaptic cell membrane. It is found in the cell membrane. Functionally, alpha subunit of nicotinic acetylcholine receptor (nAChR). Probably acts in cholinergic motoneurons to regulate presynaptic neurotransmitter release, thereby ensuring normal level of excitation of cholinergic motoneurons during locomotion. Involved in nAChR sensitivity to nicotine. The chain is Acetylcholine receptor subunit alpha-type unc-38 (unc-38) from Caenorhabditis elegans.